The following is a 199-amino-acid chain: dITP/XTP pyrophosphatase (199 aa).

Thr-8–Lys-13 serves as a coordination point for substrate. 2 residues coordinate Mg(2+): Glu-41 and Asp-70. Asp-70 acts as the Proton acceptor in catalysis. Residues Ser-71, Phe-153–Asp-156, Lys-176, and His-181–Arg-182 contribute to the substrate site.

This sequence belongs to the HAM1 NTPase family. In terms of assembly, homodimer. Requires Mg(2+) as cofactor.

The catalysed reaction is XTP + H2O = XMP + diphosphate + H(+). The enzyme catalyses dITP + H2O = dIMP + diphosphate + H(+). It carries out the reaction ITP + H2O = IMP + diphosphate + H(+). Pyrophosphatase that catalyzes the hydrolysis of nucleoside triphosphates to their monophosphate derivatives, with a high preference for the non-canonical purine nucleotides XTP (xanthosine triphosphate), dITP (deoxyinosine triphosphate) and ITP. Seems to function as a house-cleaning enzyme that removes non-canonical purine nucleotides from the nucleotide pool, thus preventing their incorporation into DNA/RNA and avoiding chromosomal lesions. This Geobacter sulfurreducens (strain ATCC 51573 / DSM 12127 / PCA) protein is dITP/XTP pyrophosphatase.